We begin with the raw amino-acid sequence, 474 residues long: HTH-type transcriptional regulator RamB (474 aa).

One can recognise an HTH cro/C1-type domain in the interval 10 to 64 (VRQLRNERGFSQAALAQMLEISPSYLNQIEHDVRPLTVAVLLRITEVFGVDATFF). The H-T-H motif DNA-binding region spans 21 to 40 (QAALAQMLEISPSYLNQIEH).

The protein belongs to the short-chain fatty acyl-CoA assimilation regulator (ScfR) family.

In terms of biological role, involved in the control of the glyoxylate cycle. RamB negatively controls the expression of icl expression during growth on acetate as the sole carbon source. The protein is HTH-type transcriptional regulator RamB of Mycobacterium tuberculosis (strain CDC 1551 / Oshkosh).